The sequence spans 307 residues: Serine/threonine-protein phosphatase PP2A-2 catalytic subunit (307 aa).

Mn(2+) contacts are provided by Asp55, His57, Asp83, and Asn115. The Proton donor role is filled by His116. 2 residues coordinate Mn(2+): His165 and His239.

It belongs to the PPP phosphatase family. PP-2A subfamily. Requires Mn(2+) as cofactor.

It localises to the cytoplasm. It catalyses the reaction O-phospho-L-seryl-[protein] + H2O = L-seryl-[protein] + phosphate. The catalysed reaction is O-phospho-L-threonyl-[protein] + H2O = L-threonyl-[protein] + phosphate. This is Serine/threonine-protein phosphatase PP2A-2 catalytic subunit (PP2A2) from Oryza sativa subsp. indica (Rice).